A 320-amino-acid polypeptide reads, in one-letter code: Ferrochelatase (320 aa).

Residues H194 and E272 each coordinate Fe cation.

It belongs to the ferrochelatase family.

It is found in the cytoplasm. It catalyses the reaction heme b + 2 H(+) = protoporphyrin IX + Fe(2+). The protein operates within porphyrin-containing compound metabolism; protoheme biosynthesis; protoheme from protoporphyrin-IX: step 1/1. Functionally, catalyzes the ferrous insertion into protoporphyrin IX. This Desulfotalea psychrophila (strain LSv54 / DSM 12343) protein is Ferrochelatase.